The following is a 416-amino-acid chain: Mitochondrial inner membrane i-AAA protease complex subunit MGR1 (416 aa).

Residues M1–N28 form a disordered region. Residues M1 to G56 are Mitochondrial intermembrane-facing. Residues D15 to N28 are compositionally biased toward basic and acidic residues. The chain crosses the membrane as a helical span at residues L57 to W73. Topologically, residues R74–K151 are mitochondrial matrix. A helical transmembrane segment spans residues L152–L169. Over T170–H416 the chain is Mitochondrial intermembrane. Positions S390–Q400 are enriched in polar residues. The disordered stretch occupies residues S390–H416.

The protein belongs to the MGR1 family. In terms of assembly, component of the mitochondrial inner membrane i-AAA protease complex composed of at least MRG1 and YME1. Interacts directly with YME1.

The protein resides in the mitochondrion inner membrane. Functionally, component of the mitochondrial inner membrane i-AAA protease complex required for mitochondrial inner membrane protein turnover. Required for growth of cells lacking the mitochondrial genome. The chain is Mitochondrial inner membrane i-AAA protease complex subunit MGR1 (MGR1) from Saccharomyces cerevisiae (strain YJM789) (Baker's yeast).